A 337-amino-acid chain; its full sequence is Vacuolar protein sorting-associated protein 26B-B (337 aa).

Residues 313 to 337 (RFEGTSHPETRPQHSGAAALEQEHE) form a disordered region.

The protein belongs to the VPS26 family. Component of the heterotrimeric retromer cargo-selective complex (CSC) which is believed to associate with variable sorting nexins to form functionally distinct retromer complex variants.

The protein resides in the cytoplasm. It localises to the membrane. Its subcellular location is the endosome. Acts as a component of the retromer cargo-selective complex (CSC). The CSC is believed to be the core functional component of retromer or respective retromer complex variants acting to prevent missorting of selected transmembrane cargo proteins into the lysosomal degradation pathway. Retromer mediates retrograde transport of cargo proteins from endosomes to the trans-Golgi network (TGN). The sequence is that of Vacuolar protein sorting-associated protein 26B-B (vps26b-b) from Xenopus laevis (African clawed frog).